The primary structure comprises 49 residues: Large ribosomal subunit protein bL33A (49 aa).

Belongs to the bacterial ribosomal protein bL33 family.

The protein is Large ribosomal subunit protein bL33A of Lactobacillus johnsonii (strain CNCM I-12250 / La1 / NCC 533).